Reading from the N-terminus, the 287-residue chain is Small ribosomal subunit protein uS2 (287 aa).

Residues 235 to 287 (ESGFATGGGDWEATAPAAASGWDDAAAQPQNWDSAAQGAASWDEAAAPKEGQW) are disordered. Residues 247 to 261 (ATAPAAASGWDDAAA) are compositionally biased toward low complexity.

Belongs to the universal ribosomal protein uS2 family. In terms of assembly, component of the small ribosomal subunit. Mature ribosomes consist of a small (40S) and a large (60S) subunit. The 40S subunit contains about 33 different proteins and 1 molecule of RNA (18S). The 60S subunit contains about 49 different proteins and 3 molecules of RNA (25S, 5.8S and 5S). Interacts with RPS21.

Its subcellular location is the cytoplasm. Required for the assembly and/or stability of the 40S ribosomal subunit. Required for the processing of the 20S rRNA-precursor to mature 18S rRNA in a late step of the maturation of 40S ribosomal subunits. This is Small ribosomal subunit protein uS2 from Pyricularia oryzae (strain 70-15 / ATCC MYA-4617 / FGSC 8958) (Rice blast fungus).